Here is a 659-residue protein sequence, read N- to C-terminus: Hemocyanin subunit B (659 aa).

The first 18 residues, 1 to 18 (MVAKWCVLAMCLLVAVGA), serve as a signal peptide directing secretion. Cu cation contacts are provided by H198, H202, and H232. Residue N318 is glycosylated (N-linked (GlcNAc...) asparagine). Cu cation is bound by residues H353, H357, and H393. C562 and C609 are oxidised to a cystine.

It belongs to the tyrosinase family. Hemocyanin subfamily. As to quaternary structure, 36-chain polymer consisting of 6 hexamers, each of which includes 4 different chains, A, B, C and D. As to expression, hemolymph.

It localises to the secreted. The protein localises to the extracellular space. Hemocyanins are copper-containing oxygen carriers occurring freely dissolved in the hemolymph of many mollusks and arthropods. This is Hemocyanin subunit B (HCB) from Scutigera coleoptrata (House centipede).